Reading from the N-terminus, the 275-residue chain is Large ribosomal subunit protein uL2 (275 aa).

A disordered region spans residues 220–275 (VRGAAMNPRDHPHGGGEGRAPRGMPTPKTKWGKPARGVKTRHNPRTDPFIIRRRTR). Residues 227–239 (PRDHPHGGGEGRA) show a composition bias toward basic and acidic residues. Residues 249–262 (KWGKPARGVKTRHN) show a composition bias toward basic residues.

It belongs to the universal ribosomal protein uL2 family. As to quaternary structure, part of the 50S ribosomal subunit. Forms a bridge to the 30S subunit in the 70S ribosome.

Its function is as follows. One of the primary rRNA binding proteins. Required for association of the 30S and 50S subunits to form the 70S ribosome, for tRNA binding and peptide bond formation. It has been suggested to have peptidyltransferase activity; this is somewhat controversial. Makes several contacts with the 16S rRNA in the 70S ribosome. This is Large ribosomal subunit protein uL2 from Roseiflexus sp. (strain RS-1).